Reading from the N-terminus, the 235-residue chain is Hydroxyacylglutathione hydrolase (235 aa).

7 residues coordinate Zn(2+): histidine 53, histidine 55, aspartate 57, histidine 58, histidine 109, aspartate 127, and histidine 165.

The protein belongs to the metallo-beta-lactamase superfamily. Glyoxalase II family. In terms of assembly, monomer. It depends on Zn(2+) as a cofactor.

It carries out the reaction an S-(2-hydroxyacyl)glutathione + H2O = a 2-hydroxy carboxylate + glutathione + H(+). The protein operates within secondary metabolite metabolism; methylglyoxal degradation; (R)-lactate from methylglyoxal: step 2/2. Functionally, thiolesterase that catalyzes the hydrolysis of S-D-lactoyl-glutathione to form glutathione and D-lactic acid. In Glaesserella parasuis serovar 5 (strain SH0165) (Haemophilus parasuis), this protein is Hydroxyacylglutathione hydrolase.